A 900-amino-acid polypeptide reads, in one-letter code: Zinc finger protein 574 (900 aa).

C2H2-type zinc fingers lie at residues 16–38, 76–98, and 126–148; these read YVCS…QNSH, YQCL…QELH, and YECV…RQTH. Ser-164 is modified (phosphoserine). Residues 213-235 form a C2H2-type 4 zinc finger; sequence YKCSECSQLFQMPADFLEHQATH. Low complexity predominate over residues 244 to 254; that stretch reads AEPATQQETQV. The segment at 244–306 is disordered; it reads AEPATQQETQ…RRNNSGESGG (63 aa). The segment covering 273-290 has biased composition (basic and acidic residues); it reads HSYELRNELRNGEAIGRD. The residue at position 301 (Ser-301) is a Phosphoserine. C2H2-type zinc fingers lie at residues 312–334, 339–361, 367–389, 395–416, 469–492, 498–520, 526–548, 554–576, 582–604, and 610–633; these read LFCS…LRSH, FKCP…LGDH, FLCV…RRAH, HSCP…RRTH, YRCL…RFVH, HKCS…LRTH, FPCP…RLTH, YRCG…RLVH, YRCQ…RYHH, and YKCR…LVIH. The C2H2-type 15; degenerate zinc finger occupies 639-662; it reads YRCSSCGAAFPSSLRLREHRCAAA. The segment at 670-692 adopts a C2H2-type 16 zinc-finger fold; that stretch reads FECGTCGKKVGSAARLQAHEAAH. The segment at 690–741 is disordered; the sequence is AAHAAAGPGEVLAKEPPAPRASRATRTPVAPSPTALSGTTSAAPAAPARRRG. Ser-721 is modified (phosphoserine). Low complexity predominate over residues 721–736; the sequence is SPTALSGTTSAAPAAP. Thr-728 is modified (phosphothreonine). 4 C2H2-type zinc fingers span residues 742 to 764, 770 to 792, 798 to 820, and 826 to 848; these read PECS…RRIH, YPCP…RRLH, FACE…RRIH, and YSCP…RKTH. Arg-836 carries the post-translational modification Asymmetric dimethylarginine.

This sequence belongs to the krueppel C2H2-type zinc-finger protein family.

It localises to the nucleus. In terms of biological role, may be involved in transcriptional regulation. The chain is Zinc finger protein 574 (Znf574) from Mus musculus (Mouse).